Reading from the N-terminus, the 944-residue chain is Weak acid resistance protein 1 (944 aa).

The zn(2)-C6 fungal-type DNA-binding region spans 76 to 109 (CVCCHSLKQKCEPSDVNDIYRKPCRRCLKHKKLC). Disordered regions lie at residues 114 to 171 (SKRT…AKQF) and 197 to 225 (SYGA…SVPT). Threonine 128 is subject to Phosphothreonine. Composition is skewed to polar residues over residues 135-144 (VNVSTKSKGP) and 205-225 (TTST…SVPT).

As to quaternary structure, homodimer. Post-translationally, phosphorylation is required for PDR12 induction.

It localises to the nucleus. Its function is as follows. transcription factor which binds to a weak acid response element (WARE) to mediate stress induction of PDR12 and FUN34, encoding an acid transporter and a putative ammonia transporter, respectively. The chain is Weak acid resistance protein 1 (WAR1) from Saccharomyces cerevisiae (strain ATCC 204508 / S288c) (Baker's yeast).